Consider the following 413-residue polypeptide: CCA-adding enzyme (413 aa).

Residues Ser-42 and Lys-45 each contribute to the ATP site. Residues Ser-42 and Lys-45 each coordinate CTP. 3 residues coordinate Mg(2+): Asp-54, Asp-56, and Asp-107. ATP contacts are provided by His-130, Lys-150, and Tyr-159. Residues His-130, Lys-150, and Tyr-159 each coordinate CTP.

This sequence belongs to the tRNA nucleotidyltransferase/poly(A) polymerase family. Archaeal CCA-adding enzyme subfamily. In terms of assembly, homodimer. Mg(2+) is required as a cofactor.

It carries out the reaction a tRNA precursor + 2 CTP + ATP = a tRNA with a 3' CCA end + 3 diphosphate. The catalysed reaction is a tRNA with a 3' CCA end + 2 CTP + ATP = a tRNA with a 3' CCACCA end + 3 diphosphate. In terms of biological role, catalyzes the addition and repair of the essential 3'-terminal CCA sequence in tRNAs without using a nucleic acid template. Adds these three nucleotides in the order of C, C, and A to the tRNA nucleotide-73, using CTP and ATP as substrates and producing inorganic pyrophosphate. tRNA 3'-terminal CCA addition is required both for tRNA processing and repair. Also involved in tRNA surveillance by mediating tandem CCA addition to generate a CCACCA at the 3' terminus of unstable tRNAs. While stable tRNAs receive only 3'-terminal CCA, unstable tRNAs are marked with CCACCA and rapidly degraded. The sequence is that of CCA-adding enzyme from Sulfurisphaera tokodaii (strain DSM 16993 / JCM 10545 / NBRC 100140 / 7) (Sulfolobus tokodaii).